A 387-amino-acid chain; its full sequence is DNA-damage-repair/toleration protein 111 (387 aa).

The tract at residues 1–213 is disordered; that stretch reads MLGGLYGDLP…TSGLGVGAGG (213 aa). Low complexity predominate over residues 19–29; sequence SGNSSSVWSSS. A compositionally biased stretch (basic and acidic residues) spans 103 to 158; the sequence is DPARPNDYEEYKREKKRKATEAEMKREMDKRRQEDEERDKREREEREKERERDNSD. Residues 214 to 260 enclose the G-patch domain; sequence QMTAAQRMMAKMGWKQGQGLGKSEQGITTPLMAKKTDRRAGVIVNAS. Residues 283-369 enclose the RRM domain; that stretch reads RVLLLRNMVG…RTVRATFYDE (87 aa).

Component of the SWAP1-SFPS-RRC1 splicing factor complex which modulates pre-mRNA splicing to promote photomorphogenesis. Interacts with SWAP1 in a light-independent manner. Associates with the photoreceptor phytochrome B (phyB) in nuclear photobodies upon response to red light. Binds to the splicing factor 1 SF1, involved in 3' splicing site recognition. In terms of tissue distribution, expressed ubiquitously with highest levels in dry seeds and in cells surrounding the base of trichomes and guard cells.

It localises to the nucleus. The protein localises to the nucleus speckle. In terms of biological role, as a member of the SWAP1-SFPS-RRC1 splicing factor complex, modulates photomorphogenesis by regulating the gene expression and pre-messenger RNA (mRNA) alternative splicing of a large number of genes, including those involved in plant responses to light signaling, probably by helping in the 3' splice site determination. Associates with and regulates EARLY FLOWERING 3 (ELF3) mRNA processing, a key component of the circadian clock also involved in photomorphogenesis. Required for light-regulated (red, far-red and blue lights) photomorphogenesis in a PHYB- and PHYTOCHROME INTERACTING FACTORS- (PIFs) dependent manner. Promotes flowering under both short (SD) and long days (LD). Controls abscisic acid (ABA) sensitivity during seed development, stomatal responsiveness and germination by monitoring ABI3 splicing, upstream of the splicing factor SUPPRESSOR OF ABI3-ABI5. Seems to be involved in the resistance to UV light and chemical DNA-damaging agents. The protein is DNA-damage-repair/toleration protein 111 of Arabidopsis thaliana (Mouse-ear cress).